We begin with the raw amino-acid sequence, 714 residues long: Ribonucleoside-diphosphate reductase 2 subunit alpha (714 aa).

Substrate contacts are provided by residues Thr-161, 177–178 (SC), Gly-206, 386–390 (NLCSE), and 588–592 (PTGSI). A disulfide bridge connects residues Cys-178 and Cys-415. The active-site Proton acceptor is the Asn-386. Catalysis depends on Cys-388, which acts as the Cysteine radical intermediate. Residue Glu-390 is the Proton acceptor of the active site.

It belongs to the ribonucleoside diphosphate reductase large chain family. In terms of assembly, tetramer of two alpha and two beta subunits.

It carries out the reaction a 2'-deoxyribonucleoside 5'-diphosphate + [thioredoxin]-disulfide + H2O = a ribonucleoside 5'-diphosphate + [thioredoxin]-dithiol. Its activity is regulated as follows. Under complex allosteric control mediated by deoxynucleoside triphosphates and ATP binding. The type of nucleotide bound at the specificity site determines substrate preference. It seems probable that ATP makes the enzyme reduce CDP and UDP, dGTP favors ADP reduction and dTTP favors GDP reduction. Lacks the N-terminal activity site. Functionally, provides the precursors necessary for DNA synthesis. Catalyzes the biosynthesis of deoxyribonucleotides from the corresponding ribonucleotides. R1E contains the binding sites for both substrates and allosteric effectors and carries out the actual reduction of the ribonucleotide. The sequence is that of Ribonucleoside-diphosphate reductase 2 subunit alpha (nrdE) from Salmonella typhimurium (strain LT2 / SGSC1412 / ATCC 700720).